A 43-amino-acid chain; its full sequence is Cytochrome b559 subunit beta (43 aa).

The helical transmembrane segment at 18 to 34 (WLAVHGLAIPTVFFLGG) threads the bilayer. Residue His-22 participates in heme binding.

The protein belongs to the PsbE/PsbF family. In terms of assembly, heterodimer of an alpha subunit and a beta subunit. PSII is composed of 1 copy each of membrane proteins PsbA, PsbB, PsbC, PsbD, PsbE, PsbF, PsbH, PsbI, PsbJ, PsbK, PsbL, PsbM, PsbT, PsbX, PsbY, PsbZ, Psb30/Ycf12, at least 3 peripheral proteins of the oxygen-evolving complex and a large number of cofactors. It forms dimeric complexes. Heme b serves as cofactor.

The protein localises to the plastid. It is found in the chloroplast thylakoid membrane. This b-type cytochrome is tightly associated with the reaction center of photosystem II (PSII). PSII is a light-driven water:plastoquinone oxidoreductase that uses light energy to abstract electrons from H(2)O, generating O(2) and a proton gradient subsequently used for ATP formation. It consists of a core antenna complex that captures photons, and an electron transfer chain that converts photonic excitation into a charge separation. This is Cytochrome b559 subunit beta from Thalassiosira pseudonana (Marine diatom).